A 430-amino-acid chain; its full sequence is 3-deoxy-D-manno-octulosonic acid transferase (430 aa).

The chain crosses the membrane as a helical; Signal-anchor span at residues 12-32 (AFLVAAFLAAAPRIFYKVVFH). Glutamate 66 functions as the Proton acceptor in the catalytic mechanism. Residues 274-275 (PR), 314-316 (MGI), and 341-344 (NLLE) each bind CMP.

The protein belongs to the glycosyltransferase group 1 family. Glycosyltransferase 30 subfamily.

Its subcellular location is the cell inner membrane. The catalysed reaction is lipid IVA (E. coli) + CMP-3-deoxy-beta-D-manno-octulosonate = alpha-Kdo-(2-&gt;6)-lipid IVA (E. coli) + CMP + H(+). It carries out the reaction alpha-Kdo-(2-&gt;6)-lipid IVA (E. coli) + CMP-3-deoxy-beta-D-manno-octulosonate = alpha-Kdo-(2-&gt;4)-alpha-Kdo-(2-&gt;6)-lipid IVA (E. coli) + CMP + H(+). The enzyme catalyses alpha-Kdo-(2-&gt;4)-alpha-Kdo-(2-&gt;6)-lipid IVA (E. coli) + CMP-3-deoxy-beta-D-manno-octulosonate = alpha-Kdo-(2-&gt;8)-alpha-Kdo-(2-&gt;4)-alpha-Kdo-(2-&gt;6)-lipid IVA (E. coli) + CMP + H(+). It functions in the pathway bacterial outer membrane biogenesis; LPS core biosynthesis. Functionally, involved in lipopolysaccharide (LPS) biosynthesis. Catalyzes the transfer of three 3-deoxy-D-manno-octulosonate (Kdo) residues from CMP-Kdo to lipid IV(A), the tetraacyldisaccharide-1,4'-bisphosphate precursor of lipid A. Thus generates the genus-specific LPS epitope of Chlamydia, composed of the trisaccharide alpha-Kdo-(2-&gt;8)-alpha-Kdo-(2-&gt;4)-alpha-Kdo. The chain is 3-deoxy-D-manno-octulosonic acid transferase (waaA) from Chlamydia muridarum (strain MoPn / Nigg).